The primary structure comprises 89 residues: Small ribosomal subunit protein uS15 (89 aa).

It belongs to the universal ribosomal protein uS15 family. In terms of assembly, part of the 30S ribosomal subunit. Forms a bridge to the 50S subunit in the 70S ribosome, contacting the 23S rRNA.

In terms of biological role, one of the primary rRNA binding proteins, it binds directly to 16S rRNA where it helps nucleate assembly of the platform of the 30S subunit by binding and bridging several RNA helices of the 16S rRNA. Functionally, forms an intersubunit bridge (bridge B4) with the 23S rRNA of the 50S subunit in the ribosome. The protein is Small ribosomal subunit protein uS15 of Thermobifida fusca (strain YX).